Here is a 387-residue protein sequence, read N- to C-terminus: TPR repeat-containing protein SYNPCC7002_A0425 (387 aa).

TPR repeat units follow at residues 63–96, 97–130, 132–164, 166–198, 200–232, 233–266, 267–300, 302–334, and 336–368; these read LNAL…EANN, ARIH…EDDN, EFFN…QPNN, AYSL…DSNN, MALQ…RPND, AELR…STRD, SAMQ…DPQS, EAFA…SPTD, and AAFY…YQQR.

In Picosynechococcus sp. (strain ATCC 27264 / PCC 7002 / PR-6) (Agmenellum quadruplicatum), this protein is TPR repeat-containing protein SYNPCC7002_A0425.